A 256-amino-acid polypeptide reads, in one-letter code: Imidazole glycerol phosphate synthase subunit HisF (256 aa).

Active-site residues include Asp12 and Asp131.

Belongs to the HisA/HisF family. As to quaternary structure, heterodimer of HisH and HisF.

It localises to the cytoplasm. The catalysed reaction is 5-[(5-phospho-1-deoxy-D-ribulos-1-ylimino)methylamino]-1-(5-phospho-beta-D-ribosyl)imidazole-4-carboxamide + L-glutamine = D-erythro-1-(imidazol-4-yl)glycerol 3-phosphate + 5-amino-1-(5-phospho-beta-D-ribosyl)imidazole-4-carboxamide + L-glutamate + H(+). It participates in amino-acid biosynthesis; L-histidine biosynthesis; L-histidine from 5-phospho-alpha-D-ribose 1-diphosphate: step 5/9. Its function is as follows. IGPS catalyzes the conversion of PRFAR and glutamine to IGP, AICAR and glutamate. The HisF subunit catalyzes the cyclization activity that produces IGP and AICAR from PRFAR using the ammonia provided by the HisH subunit. The sequence is that of Imidazole glycerol phosphate synthase subunit HisF from Pseudomonas putida (strain GB-1).